The following is a 266-amino-acid chain: Zinc finger protein CG30 (266 aa).

Residues 8–63 form an RING-type zinc finger; the sequence is CNICFSVAEIKNYFMQPIDRLTMIPVLELDTCKHQLCSMCIRKIRKRKKTPCPLCR.

Its subcellular location is the host nucleus. Its function is as follows. Plays a role in the proper expression of late and very late genes. The sequence is that of Zinc finger protein CG30 (CG30) from Bombyx mori nuclear polyhedrosis virus (BmNPV).